The chain runs to 333 residues: Mitochondrial fission regulator 1 (333 aa).

A mitochondrion-targeting transit peptide spans 1 to 48; that stretch reads MLGWIKRLIRMVFQQVGVSMQSVLWSRKPYGSSRSIVRKIGTNLSLIQ. Ser119 is subject to Phosphoserine. Positions 137 to 169 form a coiled coil; that stretch reads NEEALQKICALENELAALRAQIAKIVTQQEQQN. Disordered stretches follow at residues 177-198 and 288-315; these read STTF…PPPA and SDSQ…FGPH. Residues 179-304 are necessary and sufficient to promote mitochondrial fission; the sequence is TFGTIPPHPP…EKGIPKSESE (126 aa). Over residues 184–198 the composition is skewed to pro residues; sequence PPHPPPPPPPLPPPA. Basic and acidic residues predominate over residues 288-307; it reads SDSQDEVEKGIPKSESEATS.

Belongs to the MTFR1 family.

Its subcellular location is the mitochondrion. Its function is as follows. May play a role in mitochondrial aerobic respiration. May also regulate mitochondrial organization and fission. The polypeptide is Mitochondrial fission regulator 1 (MTFR1) (Homo sapiens (Human)).